A 234-amino-acid chain; its full sequence is 1-(5-phosphoribosyl)-5-[(5-phosphoribosylamino)methylideneamino] imidazole-4-carboxamide isomerase (234 aa).

Asp-9 acts as the Proton acceptor in catalysis. The active-site Proton donor is Asp-131.

Belongs to the HisA/HisF family.

Its subcellular location is the cytoplasm. The catalysed reaction is 1-(5-phospho-beta-D-ribosyl)-5-[(5-phospho-beta-D-ribosylamino)methylideneamino]imidazole-4-carboxamide = 5-[(5-phospho-1-deoxy-D-ribulos-1-ylimino)methylamino]-1-(5-phospho-beta-D-ribosyl)imidazole-4-carboxamide. It participates in amino-acid biosynthesis; L-histidine biosynthesis; L-histidine from 5-phospho-alpha-D-ribose 1-diphosphate: step 4/9. This is 1-(5-phosphoribosyl)-5-[(5-phosphoribosylamino)methylideneamino] imidazole-4-carboxamide isomerase from Staphylococcus saprophyticus subsp. saprophyticus (strain ATCC 15305 / DSM 20229 / NCIMB 8711 / NCTC 7292 / S-41).